Consider the following 198-residue polypeptide: MAEKQTAKRNRREEILQSLALMLESSDGSQRITTAKLAASVGVSEAALYRHFPSKTRMFDSLIEFIEDSLITRINLILKDEKDTTARLRLIVLLLLGFGERNPGLTRILTGHALMFEQDRLQGRINQLFERIEAQLRQVLREKRMREGEGYATDETLLASQILAFCEGMLSRFVRSEFKYRPTDDFDARWPLIAAQLQ.

The HTH tetR-type domain maps to 10-70 (NRREEILQSL…SLIEFIEDSL (61 aa)). Positions 33–52 (TTAKLAASVGVSEAALYRHF) form a DNA-binding region, H-T-H motif. Residues 117 to 144 (EQDRLQGRINQLFERIEAQLRQVLREKR) adopt a coiled-coil conformation.

The protein belongs to the nucleoid occlusion factor SlmA family. As to quaternary structure, homodimer. Interacts with FtsZ.

The protein localises to the cytoplasm. The protein resides in the nucleoid. Its function is as follows. Required for nucleoid occlusion (NO) phenomenon, which prevents Z-ring formation and cell division over the nucleoid. Acts as a DNA-associated cell division inhibitor that binds simultaneously chromosomal DNA and FtsZ, and disrupts the assembly of FtsZ polymers. SlmA-DNA-binding sequences (SBS) are dispersed on non-Ter regions of the chromosome, preventing FtsZ polymerization at these regions. The polypeptide is Nucleoid occlusion factor SlmA (Escherichia coli O45:K1 (strain S88 / ExPEC)).